Here is a 489-residue protein sequence, read N- to C-terminus: Betaine aldehyde dehydrogenase (489 aa).

Residues threonine 26 and aspartate 93 each coordinate K(+). Residue 150-152 participates in NAD(+) binding; the sequence is GAW. Lysine 162 acts as the Charge relay system in catalysis. 176 to 179 is a binding site for NAD(+); the sequence is KPSE. Valine 180 provides a ligand contact to K(+). 229 to 232 contributes to the NAD(+) binding site; that stretch reads GVET. Residue leucine 245 coordinates K(+). Catalysis depends on glutamate 251, which acts as the Proton acceptor. NAD(+) contacts are provided by glycine 253, cysteine 285, and glutamate 386. Cysteine 285 (nucleophile) is an active-site residue. Residue cysteine 285 is modified to Cysteine sulfenic acid (-SOH). Positions 456 and 459 each coordinate K(+). Glutamate 463 functions as the Charge relay system in the catalytic mechanism.

This sequence belongs to the aldehyde dehydrogenase family. Dimer of dimers. It depends on K(+) as a cofactor.

It catalyses the reaction betaine aldehyde + NAD(+) + H2O = glycine betaine + NADH + 2 H(+). It participates in amine and polyamine biosynthesis; betaine biosynthesis via choline pathway; betaine from betaine aldehyde: step 1/1. Involved in the biosynthesis of the osmoprotectant glycine betaine. Catalyzes the irreversible oxidation of betaine aldehyde to the corresponding acid. In Burkholderia orbicola (strain AU 1054), this protein is Betaine aldehyde dehydrogenase.